The following is a 517-amino-acid chain: T-box transcription factor TBX22 (517 aa).

Residues 1-83 (MALSSRAHAF…SDESNSQESL (83 aa)) are disordered. Residues 35–45 (LQEEQFVEEGE) are compositionally biased toward acidic residues. Positions 46–66 (EILRSPSRDSQQPEKRLKAES) are enriched in basic and acidic residues. Residues 74-83 (SDESNSQESL) are compositionally biased toward low complexity. Residues 93-280 (LQGSDLWKRF…RNPFAKGFRD (188 aa)) constitute a DNA-binding region (T-box). A disordered region spans residues 312 to 333 (TQSGSSGSSPVTSSGGAPSPLN). The span at 314-333 (SGSSGSSPVTSSGGAPSPLN) shows a compositional bias: low complexity.

The protein localises to the nucleus. Probable transcriptional regulator involved in developmental processes. This is major determinant crucial to palatogenesis. This chain is T-box transcription factor TBX22 (Tbx22), found in Mus musculus (Mouse).